Here is a 168-residue protein sequence, read N- to C-terminus: Photosystem I assembly protein Ycf3 (168 aa).

TPR repeat units follow at residues 35–68 (AFAY…EMDP), 72–105 (SYIL…NPFL), and 120–153 (GEQA…TPDN).

It belongs to the Ycf3 family.

Its subcellular location is the plastid membrane. Its function is as follows. Essential for the assembly of the photosystem I (PSI) complex. May act as a chaperone-like factor to guide the assembly of the PSI subunits. This Cuscuta obtusiflora (Peruvian dodder) protein is Photosystem I assembly protein Ycf3.